The primary structure comprises 89 residues: Small ribosomal subunit protein uS19 (89 aa).

The protein belongs to the universal ribosomal protein uS19 family.

Functionally, protein S19 forms a complex with S13 that binds strongly to the 16S ribosomal RNA. The polypeptide is Small ribosomal subunit protein uS19 (Ruthia magnifica subsp. Calyptogena magnifica).